Here is a 170-residue protein sequence, read N- to C-terminus: Myelin-associated oligodendrocyte basic protein (170 aa).

Residues 69–170 (SRRATSPQRP…GSPTRAPRFW (102 aa)) form a disordered region. Low complexity predominate over residues 82–92 (PAASPVVVRAP). Phosphoserine occurs at positions 85, 98, and 107. 2 tandem repeats follow at residues 93 to 101 (PAKPKSPLM) and 105 to 110 (PRSPPR). The interval 93-115 (PAKPKSPLMPAKPRSPPRPAKPR) is 3 X 9 AA approximate tandem repeats. Residues 111-115 (PAKPR) form a 3; half-length repeat. Residues 118–130 (SRTERQPRPRPEV) show a composition bias toward basic and acidic residues. Positions 138–151 (KPPQKSKQPARSSP) are enriched in low complexity.

It is found in the cytoplasm. Its subcellular location is the perinuclear region. Functionally, may play a role in compacting or stabilizing the myelin sheath possibly by binding the negatively charged acidic phospholipids of the cytoplasmic membrane. This is Myelin-associated oligodendrocyte basic protein (Mobp) from Mus musculus (Mouse).